The primary structure comprises 459 residues: UDP-N-acetylmuramoylalanine--D-glutamate ligase (459 aa).

118–124 (GTNGKTT) is a binding site for ATP.

It belongs to the MurCDEF family.

The protein localises to the cytoplasm. It carries out the reaction UDP-N-acetyl-alpha-D-muramoyl-L-alanine + D-glutamate + ATP = UDP-N-acetyl-alpha-D-muramoyl-L-alanyl-D-glutamate + ADP + phosphate + H(+). It participates in cell wall biogenesis; peptidoglycan biosynthesis. In terms of biological role, cell wall formation. Catalyzes the addition of glutamate to the nucleotide precursor UDP-N-acetylmuramoyl-L-alanine (UMA). In Desulfosudis oleivorans (strain DSM 6200 / JCM 39069 / Hxd3) (Desulfococcus oleovorans), this protein is UDP-N-acetylmuramoylalanine--D-glutamate ligase.